A 78-amino-acid chain; its full sequence is MSRACELTGAKANNGMAVSHSHIRTKKLQQVNLQKRRLWWEEGKKWVNIKISTKALKSIQKVGLDKFAKSNGVDLKKF.

The protein belongs to the bacterial ribosomal protein bL28 family.

The chain is Large ribosomal subunit protein bL28 from Prochlorococcus marinus (strain AS9601).